Here is a 143-residue protein sequence, read N- to C-terminus: 6,7-dimethyl-8-ribityllumazine synthase (143 aa).

5-amino-6-(D-ribitylamino)uracil-binding positions include F13, 45–47 (TFD), and 69–71 (CVI). (2S)-2-hydroxy-3-oxobutyl phosphate is bound at residue 74–75 (ET). Residue H77 is the Proton donor of the active site. A 5-amino-6-(D-ribitylamino)uracil-binding site is contributed by L102. R117 contacts (2S)-2-hydroxy-3-oxobutyl phosphate.

The protein belongs to the DMRL synthase family.

It catalyses the reaction (2S)-2-hydroxy-3-oxobutyl phosphate + 5-amino-6-(D-ribitylamino)uracil = 6,7-dimethyl-8-(1-D-ribityl)lumazine + phosphate + 2 H2O + H(+). The protein operates within cofactor biosynthesis; riboflavin biosynthesis; riboflavin from 2-hydroxy-3-oxobutyl phosphate and 5-amino-6-(D-ribitylamino)uracil: step 1/2. Functionally, catalyzes the formation of 6,7-dimethyl-8-ribityllumazine by condensation of 5-amino-6-(D-ribitylamino)uracil with 3,4-dihydroxy-2-butanone 4-phosphate. This is the penultimate step in the biosynthesis of riboflavin. This Archaeoglobus fulgidus (strain ATCC 49558 / DSM 4304 / JCM 9628 / NBRC 100126 / VC-16) protein is 6,7-dimethyl-8-ribityllumazine synthase.